The following is a 530-amino-acid chain: Na(+)/H(+) antiporter NhaB (530 aa).

The next 13 membrane-spanning stretches (helical) occupy residues 13–33 (FLGK…IINP), 34–54 (FVFF…EFIF), 64–84 (PLQP…TSPA), 90–110 (LVAN…IYFM), 113–133 (LLLY…LLSL), 136–156 (CLMA…AVVI), 205–225 (LLMH…VGEP), 234–254 (AGWL…PVFM), 306–326 (ALIA…VGLI), 351–371 (EEAL…AVII), 378–400 (PIIS…IANG), 450–470 (ATPN…APLI), and 481–501 (ALPY…FMLL).

Belongs to the NhaB Na(+)/H(+) (TC 2.A.34) antiporter family.

It localises to the cell inner membrane. It catalyses the reaction 2 Na(+)(in) + 3 H(+)(out) = 2 Na(+)(out) + 3 H(+)(in). Its function is as follows. Na(+)/H(+) antiporter that extrudes sodium in exchange for external protons. This Photobacterium profundum (strain SS9) protein is Na(+)/H(+) antiporter NhaB.